Reading from the N-terminus, the 289-residue chain is Mas-related G-protein coupled receptor member G (289 aa).

The Extracellular portion of the chain corresponds to 1 to 13 (MLSIFNIWGTFNR). A helical membrane pass occupies residues 14–34 (VLFFLSLTVSLAGLAGNTLLL). The Cytoplasmic segment spans residues 35–49 (WHLGLRIKKGPFNTY). The helical transmembrane segment at 50-70 (LLHLAAADFLFLSCQVGFSIA) threads the bilayer. At 71–80 (KIASGYEDTL) the chain is on the extracellular side. Residues 81–101 (YFPVTFLWFAVGLWLLAAFIV) form a helical membrane-spanning segment. Over 102–123 (DCCLSYMFPSFCGPNCRPRYTS) the chain is Cytoplasmic. The helical transmembrane segment at 124-144 (FVLCLVIWALTMLAVLLPANA) threads the bilayer. The Extracellular segment spans residues 145-164 (CGLLYNRMSLLVCLKYHWVS). The helical transmembrane segment at 165–185 (VVWLGVLASTACGASMFLLVF) threads the bilayer. Residues 186-200 (GNCCSSQPPSKFCKL) lie on the Cytoplasmic side of the membrane. A helical membrane pass occupies residues 201–221 (AQCSGILLFFCRLPLVFYWCL). Position 222 (arginine 222) is a topological domain, extracellular. Residues 223 to 243 (PVIKFLLPFFFPLATLLACID) traverse the membrane as a helical segment. Residues 244-289 (SSAKPLLYYLKGRQLRKEPLQVALNRALGEESQSSSGGISLPMSRV) are Cytoplasmic-facing.

It belongs to the G-protein coupled receptor 1 family. Mas subfamily.

It is found in the cell membrane. Its function is as follows. Orphan receptor. May regulate nociceptor function and/or development, including the sensation or modulation of pain. This is Mas-related G-protein coupled receptor member G (Mrgprg) from Rattus norvegicus (Rat).